The following is a 54-amino-acid chain: uncharacterized protein (54 aa).

Residues 23-35 (DVMQEGETAKELN) show a composition bias toward basic and acidic residues. The segment at 23–54 (DVMQEGETAKELNYEGEDMQATSSAQNRQTSV) is disordered. Residues 42–54 (QATSSAQNRQTSV) show a composition bias toward polar residues.

This is an uncharacterized protein from Bacillus subtilis (strain 168).